A 458-amino-acid polypeptide reads, in one-letter code: Sulfite efflux pump SSU1 (458 aa).

Residues 1-11 (MVANWVLALTR) lie on the Cytoplasmic side of the membrane. Residues 12–32 (QFDPFMFMMVMGVGISSNILY) traverse the membrane as a helical segment. At 33 to 48 (SFPYPARWLRICSYIM) the chain is on the extracellular side. The helical transmembrane segment at 49 to 69 (FAIACLIFIAVQALQILHLIV) threads the bilayer. The Cytoplasmic segment spans residues 70 to 89 (YIKEKSFREYFNDFFRNMKH). The chain crosses the membrane as a helical span at residues 90–110 (NLFWGTYPMGLVTIINFLGAL). Topologically, residues 111–135 (SKANTTKSPTNARNLMIFVYVLWWY) are extracellular. Residues 136–156 (DLAVCLVIAWGISFLIWHDYY) traverse the membrane as a helical segment. Over 157-176 (PLEGIGNYPSYNIKMASENM) the chain is Cytoplasmic. A helical transmembrane segment spans residues 177–197 (KSVLLLDIIPLVVVASSCGTF). The Extracellular portion of the chain corresponds to 198–220 (TMSEIFFHAFNRNIQLITLVICA). The helical transmembrane segment at 221-241 (LTWLHAIIFVFILIAIYFWSL) threads the bilayer. Over 242–252 (YINKIPPMTQV) the chain is Cytoplasmic. Residues 253–275 (FTLFLLLGPMGQGSFGVLLLTDN) traverse the membrane as a helical segment. The Extracellular segment spans residues 276-309 (IKKYAGKYYPTDNITREQEILTIAVPWCFKILGM). The helical transmembrane segment at 310-330 (VSAMALLAMGYFFTVISVVSI) threads the bilayer. Residues 331–350 (LSYYNKKEIENETGKVKRVY) are Cytoplasmic-facing. The chain crosses the membrane as a helical span at residues 351-371 (TFHKGFWGMTFPMGTMSLGNE). Residues 372 to 387 (ELYVQYNQYVPLYAFR) lie on the Extracellular side of the membrane. A helical membrane pass occupies residues 388 to 408 (VLGTIYGGVCVCWSILCLLCT). Over 409-458 (LHEYSKKMLHAARKSSLFSESGTEKTTVSPYNSIESVEESNSALDFTRLA) the chain is Cytoplasmic. Residues S444, S448, and S450 each carry the phosphoserine modification.

Belongs to the tellurite-resistance/dicarboxylate transporter (TDT) family.

It is found in the cell membrane. In terms of biological role, involved in efflux of free sulfite. Mutations in the SSU1 gene cause sensitivity to sulfite. In Saccharomyces cerevisiae (strain ATCC 204508 / S288c) (Baker's yeast), this protein is Sulfite efflux pump SSU1 (SSU1).